The chain runs to 248 residues: Ureidoacrylate amidohydrolase RutB (248 aa).

Residue Asp-41 is the Proton acceptor of the active site. Residue Lys-150 is part of the active site. Cys-183 functions as the Nucleophile in the catalytic mechanism.

It belongs to the isochorismatase family. RutB subfamily.

The catalysed reaction is (Z)-3-ureidoacrylate + H2O + H(+) = (Z)-3-aminoacrylate + NH4(+) + CO2. The enzyme catalyses (Z)-3-ureidoacrylate + H2O = (Z)-3-aminoacrylate + carbamate + H(+). It catalyses the reaction (Z)-2-methylureidoacrylate + H2O + H(+) = (Z)-2-methylaminoacrylate + NH4(+) + CO2. Functionally, hydrolyzes ureidoacrylate to form aminoacrylate and carbamate. The carbamate hydrolyzes spontaneously, thereby releasing one of the nitrogen atoms of the pyrimidine ring as ammonia and one of its carbon atoms as CO2. This Methylorubrum extorquens (strain DSM 6343 / CIP 106787 / DM4) (Methylobacterium extorquens) protein is Ureidoacrylate amidohydrolase RutB.